Consider the following 331-residue polypeptide: Fe-S cluster assembly protein DRE2 (331 aa).

The N-terminal SAM-like domain stretch occupies residues 1–146 (MSEILLLLHP…MPTFKKPVSS (146 aa)). The disordered stretch occupies residues 142–164 (KPVSSPVTLTDTSANNTDAEDDL). Residues 146–158 (SPVTLTDTSANNT) are compositionally biased toward polar residues. The tract at residues 147–202 (PVTLTDTSANNTDAEDDLSMKRKLDSTKLAYFSDDSSGEEDDLIDENELIADSHKF) is linker. Residues Cys-212, Cys-224, Cys-227, and Cys-229 each contribute to the [2Fe-2S] cluster site. Residues 212-229 (CELPNGKKRKKACKDCTC) are fe-S binding site A. The [4Fe-4S] cluster site is built by Cys-294, Cys-297, Cys-305, and Cys-308. 2 consecutive short sequence motifs (cx2C motif) follow at residues 294 to 297 (CSSC) and 305 to 308 (CDGC). Residues 294–308 (CSSCALGDAFRCDGC) are fe-S binding site B.

The protein belongs to the anamorsin family. Monomer. Interacts with TAH18. Interacts with MIA40. [2Fe-2S] cluster is required as a cofactor. It depends on [4Fe-4S] cluster as a cofactor.

The protein localises to the cytoplasm. Its subcellular location is the mitochondrion intermembrane space. Component of the cytosolic iron-sulfur (Fe-S) protein assembly (CIA) machinery required for the maturation of extramitochondrial Fe-S proteins. Part of an electron transfer chain functioning in an early step of cytosolic Fe-S biogenesis, facilitating the de novo assembly of a [4Fe-4S] cluster on the scaffold complex CFD1-NBP35. Electrons are transferred to DRE2 from NADPH via the FAD- and FMN-containing protein TAH18. TAH18-DRE2 are also required for the assembly of the diferric tyrosyl radical cofactor of ribonucleotide reductase (RNR), probably by providing electrons for reduction during radical cofactor maturation in the catalytic small subunit RNR2. This is Fe-S cluster assembly protein DRE2 from Clavispora lusitaniae (strain ATCC 42720) (Yeast).